Reading from the N-terminus, the 386-residue chain is Bifunctional desaturase/conjugase FADX (386 aa).

The disordered stretch occupies residues Met-1–Pro-28. Helical transmembrane passes span Leu-65–Thr-85 and Ile-87–Gly-107. The short motif at His-108 to His-112 is the Histidine box-1 element. The Histidine box-2 motif lies at His-144–His-148. The next 3 helical transmembrane spans lie at Ala-182–Ser-202, Ile-228–Ala-248, and Gly-250–Val-270. The Histidine box-3 signature appears at His-318 to His-322.

This sequence belongs to the fatty acid desaturase type 1 family. Expressed exclusively in developing seeds.

The protein resides in the endoplasmic reticulum membrane. The enzyme catalyses a (9Z,12Z)-octadecadienoyl-containing glycerolipid + 2 Fe(II)-[cytochrome b5] + O2 + 2 H(+) = a (9Z,11E,13E)-octadecatrienoyl-containing glycerolipid + 2 Fe(III)-[cytochrome b5] + 2 H2O. The catalysed reaction is (9Z,12Z,15Z)-octadecatrienoyl-containing glycerolipid + 2 Fe(II)-[cytochrome b5] + O2 + 2 H(+) = a (9Z,11E,13E,15Z)-octadecatetraenoyl-containing glycerolipid + 2 Fe(III)-[cytochrome b5] + 2 H2O. It catalyses the reaction a (9Z)-octadecenoyl-containing glycerolipid + 2 Fe(II)-[cytochrome b5] + O2 + 2 H(+) = a (9Z,12E)-octadecadienoyl-containing glycerolipid + 2 Fe(III)-[cytochrome b5] + 2 H2O. It carries out the reaction a (9Z)-hexadecenoyl-containing glycerolipid + 2 Fe(II)-[cytochrome b5] + O2 + 2 H(+) = a (9Z,12E)-hexadecadienoyl-containing glycerolipid + 2 Fe(III)-[cytochrome b5] + 2 H2O. The protein operates within lipid metabolism; polyunsaturated fatty acid biosynthesis. In terms of biological role, converts linoleic acid to alpha-eleostearic acid (18:3(9Z,11E,13E)) and alpha-linolenic acid to alpha-parinaric acid (18:4(9Z,11E,13E,15Z)). Converts a single cis double bond at carbon 12 to two conjugated trans bonds at positions 11 and 13. Can also act as a 12(E) desaturase when acting on the monounsaturated fatty acids oleate and palmitoleate, stereoselectively introducing a trans double bond. In Vernicia fordii (Tung), this protein is Bifunctional desaturase/conjugase FADX.